Consider the following 289-residue polypeptide: Esterase GA18864 (289 aa).

Over residues 1-19 the composition is skewed to low complexity; that stretch reads MTNNDAAVEAPSSSRASSS. Residues 1–24 are disordered; it reads MTNNDAAVEAPSSSRASSSKQQPK. Active-site charge relay system residues include Ser-133, Asp-191, and His-218. The disordered stretch occupies residues 253–289; it reads VSFIESGAEDNDDDGDANDAEVAAATAAAGSDLDDSD. The span at 259–271 shows a compositional bias: acidic residues; the sequence is GAEDNDDDGDAND. The segment covering 272–283 has biased composition (low complexity); the sequence is AEVAAATAAAGS.

It belongs to the LovG family.

This chain is Esterase GA18864, found in Drosophila pseudoobscura pseudoobscura (Fruit fly).